The following is a 232-amino-acid chain: Noggin (232 aa).

An N-terminal signal peptide occupies residues 1 to 27 (MERCPSLGVTLYALVVVLGLRATPAGG). Residue Asn62 is glycosylated (N-linked (GlcNAc...) asparagine). Residues 77–96 (GFMATSPPEDRPGGGGGAAG) form a disordered region. 4 disulfide bridges follow: Cys155–Cys192, Cys178–Cys228, Cys184–Cys230, and Cys207–Cys215.

It belongs to the noggin family. As to quaternary structure, homodimer. Interacts with GDF5; inhibits chondrocyte differentiation.

The protein resides in the secreted. Its function is as follows. Inhibitor of bone morphogenetic proteins (BMP) signaling which is required for growth and patterning of the neural tube and somite. Essential for cartilage morphogenesis and joint formation. Inhibits chondrocyte differentiation through its interaction with GDF5 and, probably, GDF6. The chain is Noggin (NOG) from Homo sapiens (Human).